The primary structure comprises 23 residues: Defensin-like protein 2 (23 aa).

A Pyrrolidone carboxylic acid modification is found at Q1.

Belongs to the DEFL family. As to quaternary structure, forms oligomers in its native state.

Functionally, possesses antifungal activity sensitive to inorganic cations. The sequence is that of Defensin-like protein 2 from Brassica napus (Rape).